Consider the following 40-residue polypeptide: uncharacterized protein (40 aa).

Positions 1–14 (MNRMLSLSVQSQRA) are enriched in polar residues. The interval 1–25 (MNRMLSLSVQSQRAPASPSPYGLKI) is disordered.

This is an uncharacterized protein from Treponema pallidum (strain Nichols).